Reading from the N-terminus, the 120-residue chain is MSKSGRLTTHVLDTALGRPAHGLKIDLYRLEGDARHLIRTVHTNSDGRVDGPLMEGAGFATGTYELVFHAGDYFRSAGVKLPDPAFLELVPLRFGIADADSHYHVPLLLSPYGYSTYRGS.

The substrate site is built by His-10, Arg-48, and Tyr-117.

It belongs to the transthyretin family. 5-hydroxyisourate hydrolase subfamily. Homotetramer.

The enzyme catalyses 5-hydroxyisourate + H2O = 5-hydroxy-2-oxo-4-ureido-2,5-dihydro-1H-imidazole-5-carboxylate + H(+). Its function is as follows. Catalyzes the hydrolysis of 5-hydroxyisourate (HIU) to 2-oxo-4-hydroxy-4-carboxy-5-ureidoimidazoline (OHCU). The chain is 5-hydroxyisourate hydrolase 2 from Rhizobium meliloti (strain 1021) (Ensifer meliloti).